The sequence spans 735 residues: Muskelin (735 aa).

An N-acetylalanine modification is found at Ala-2. The LisH domain occupies 172–204 (REQEAIRLCLKHFRQHNYTEAFESLQKKTKIAL). In terms of domain architecture, CTLH spans 206–258 (HPMLTDMHDKLVLKGDFDACEELIEKAVNDGLFNQYISQQEYKPRWSQIIPKS). Kelch repeat units follow at residues 284–330 (TVYL…SCHK), 339–391 (QIYT…FDHQ), 400–458 (MIYT…SRIG), 469–515 (CLYV…TGFT), 526–578 (EIHV…SLQE), and 597–651 (VHYL…AQMD). Residues 701–735 (DHTYAQRTQLFDTLVNFFPDSMTPPKGNLVDLITL) are important for location in the cytosol.

In terms of assembly, homodimer; may form higher oligomers. Identified in the CTLH complex that contains GID4, RANBP9 and/or RANBP10, MKLN1, MAEA, RMND5A (or alternatively its paralog RMND5B), GID8, ARMC8, WDR26 and YPEL5. Within this complex, MAEA, RMND5A (or alternatively its paralog RMND5B), GID8, WDR26, and RANBP9 and/or RANBP10 form the catalytic core, while GID4, MKLN1, ARMC8 and YPEL5 have ancillary roles. Interacts with RANBP9. Part of a complex consisting of RANBP9, MKLN1 and GID8. Interacts with GABRA1. Interacts with the C-terminal tail of PTGER3. Detected in brain, especially in hippocampus and cerebellum (at protein level).

The protein resides in the cytoplasm. It localises to the cytosol. Its subcellular location is the nucleus. It is found in the nucleoplasm. The protein localises to the cell projection. The protein resides in the ruffle. It localises to the cell cortex. Its subcellular location is the synapse. It is found in the postsynapse. Its function is as follows. Component of the CTLH E3 ubiquitin-protein ligase complex that selectively accepts ubiquitin from UBE2H and mediates ubiquitination and subsequent proteasomal degradation of the transcription factor HBP1. Required for internalization of the GABA receptor GABRA1 from the cell membrane via endosomes and subsequent GABRA1 degradation. Acts as a mediator of cell spreading and cytoskeletal responses to the extracellular matrix component THBS1. The polypeptide is Muskelin (Mkln1) (Mus musculus (Mouse)).